The sequence spans 137 residues: NADPH-dependent 7-cyano-7-deazaguanine reductase (137 aa).

Cys50 serves as the catalytic Thioimide intermediate. The active-site Proton donor is the Asp57. Residues Val72–Leu74 and His91–Glu92 each bind substrate.

This sequence belongs to the GTP cyclohydrolase I family. QueF type 1 subfamily.

The protein resides in the cytoplasm. The enzyme catalyses 7-aminomethyl-7-carbaguanine + 2 NADP(+) = 7-cyano-7-deazaguanine + 2 NADPH + 3 H(+). Its pathway is tRNA modification; tRNA-queuosine biosynthesis. In terms of biological role, catalyzes the NADPH-dependent reduction of 7-cyano-7-deazaguanine (preQ0) to 7-aminomethyl-7-deazaguanine (preQ1). This is NADPH-dependent 7-cyano-7-deazaguanine reductase from Synechocystis sp. (strain ATCC 27184 / PCC 6803 / Kazusa).